A 257-amino-acid polypeptide reads, in one-letter code: uncharacterized protein (257 aa).

N-linked (GlcNAc...) asparagine; by host glycans are attached at residues N61, N95, N102, N111, N139, N148, and N152. The helical transmembrane segment at 233–253 threads the bilayer; sequence WYIIGGIFWVIVLIILVIFII.

The protein resides in the host membrane. It is found in the virion. This is an uncharacterized protein from Acanthamoeba polyphaga (Amoeba).